A 178-amino-acid polypeptide reads, in one-letter code: Caveolin-1 (178 aa).

Serine 2 is subject to N-acetylserine. Serine 2 bears the Phosphoserine mark. The required for homooligomerization stretch occupies residues 2-94 (SGGKYVDSEG…WKASFTTFTV (93 aa)). The Cytoplasmic segment spans residues 2 to 104 (SGGKYVDSEG…TKYWFYRLLS (103 aa)). Lysine 5 is modified (N6-acetyllysine; alternate). A Glycyl lysine isopeptide (Lys-Gly) (interchain with G-Cter in ubiquitin); alternate cross-link involves residue lysine 5. Phosphotyrosine is present on tyrosine 6. Serine 9 bears the Phosphoserine mark. Residue tyrosine 14 is modified to Phosphotyrosine; by ABL1. A Phosphotyrosine modification is found at tyrosine 25. Residues lysine 26, lysine 30, lysine 39, lysine 47, and lysine 57 each participate in a glycyl lysine isopeptide (Lys-Gly) (interchain with G-Cter in ubiquitin) cross-link. The segment at 82 to 94 (DGIWKASFTTFTV) is interaction with CAVIN3. Positions 105-125 (TLFGIPMALIWGIYFAILSFL) form an intramembrane region, helical. Residues 126–178 (HIWAVVPCIKSFLIEIQCIGRVYSIYIHTFCDPLFEAVGKLFSNIRINMQKEI) are Cytoplasmic-facing. The interacts with SPRY1, SPRY2, SPRY3 and SPRY4 stretch occupies residues 131–142 (VPCIKSFLIEIQ). Residues cysteine 133, cysteine 143, and cysteine 156 are each lipidated (S-palmitoyl cysteine). The tract at residues 149 to 160 (SIYIHTFCDPLF) is interacts with SPRY1, SPRY2, and SPRY4. The tract at residues 167 to 178 (FSNIRINMQKEI) is interacts with SPRY1, SPRY2, SPRY3 and SPRY4.

Belongs to the caveolin family. Homooligomer. Interacts with GLIPR2. Interacts with NOSTRIN. Interacts with SNAP25 and STX1A. Interacts (via the N-terminus) with DPP4; the interaction is direct. Interacts with CTNNB1, CDH1 and JUP. Interacts with PACSIN2; this interaction induces membrane tubulation. Interacts with SLC7A9. Interacts with BMX and BTK. Interacts with TGFBR1. Interacts with CAVIN3 (via leucine-zipper domain) in a cholesterol-sensitive manner. Interacts with CAVIN1. Interacts with EHD2 in a cholesterol-dependent manner. Forms a ternary complex with UBXN6 and VCP; mediates CAV1 targeting to lysosomes for degradation. Interacts with ABCG1; this interaction regulates ABCG1-mediated cholesterol efflux. Interacts with NEU3; this interaction enhances NEU3 sialidase activity within caveola. Interacts (via C-terminus) with SPRY1, SPRY2 (via C-terminus), SPRY3, and SPRY4. Interacts with IGFBP5; this interaction allows trafficking of IGFBP5 from the plasma membrane to the nucleus. Phosphorylated at Tyr-14 by ABL1 in response to oxidative stress. Post-translationally, ubiquitinated. Undergo monoubiquitination and multi- and/or polyubiquitination. Monoubiquitination of N-terminal lysines promotes integration in a ternary complex with UBXN6 and VCP which promotes oligomeric CAV1 targeting to lysosomes for degradation. Ubiquitinated by ZNRF1; leading to degradation and modulation of the TLR4-mediated immune response.

Its subcellular location is the golgi apparatus membrane. The protein resides in the cell membrane. It is found in the membrane. It localises to the caveola. The protein localises to the membrane raft. In terms of biological role, may act as a scaffolding protein within caveolar membranes. Forms a stable heterooligomeric complex with CAV2 that targets to lipid rafts and drives caveolae formation. Mediates the recruitment of CAVIN proteins (CAVIN1/2/3/4) to the caveolae. Interacts directly with G-protein alpha subunits and can functionally regulate their activity. Involved in the costimulatory signal essential for T-cell receptor (TCR)-mediated T-cell activation. Its binding to DPP4 induces T-cell proliferation and NF-kappa-B activation in a T-cell receptor/CD3-dependent manner. Recruits CTNNB1 to caveolar membranes and may regulate CTNNB1-mediated signaling through the Wnt pathway. Negatively regulates TGFB1-mediated activation of SMAD2/3 by mediating the internalization of TGFBR1 from membrane rafts leading to its subsequent degradation. Binds 20(S)-hydroxycholesterol (20(S)-OHC). The sequence is that of Caveolin-1 (CAV1) from Dasypus novemcinctus (Nine-banded armadillo).